Reading from the N-terminus, the 186-residue chain is ADP-ribosylation factor-like protein alp41 (186 aa).

Residue Gly-2 is the site of N-myristoyl glycine attachment. GTP is bound by residues 23–30 (GLDNAGKT), 66–70 (DIGGQ), and 125–128 (NKSD).

The protein belongs to the small GTPase superfamily. Arf family.

The protein resides in the cytoplasm. The protein localises to the cytoskeleton. Its function is as follows. Has a role in the cofactor-dependent pathway of microtubule biogenesis. Required for growth polarity control. This chain is ADP-ribosylation factor-like protein alp41 (alp41), found in Schizosaccharomyces pombe (strain 972 / ATCC 24843) (Fission yeast).